The chain runs to 588 residues: Outer membrane transporter CdiB (588 aa).

The 76-residue stretch at 104-179 (FTVSSIVVSG…GVLHITVMEG (76 aa)) folds into the POTRA domain.

It belongs to the TPS (TC 1.B.20) family.

It localises to the cell outer membrane. Functionally, potential outer membrane protein component of a toxin-immunity protein module, which functions as a cellular contact-dependent growth inhibition (CDI) system. CDI modules allow bacteria to communicate with and inhibit the growth of closely related neighboring bacteria in a contact-dependent fashion. This protein may be required for secretion and assembly of the CdiA toxin protein. Inhibitory cells must be in logarithmic (not stationary) phase to inhibit growth of their targets, while the presence of P or S but not type 1 pili protects the target cells against growth inhibition. Probable member of a two partner secretion pathway (TPS) in which it mediates the secretion of CdiA. The sequence is that of Outer membrane transporter CdiB from Escherichia coli.